Consider the following 403-residue polypeptide: Imidazolonepropionase (403 aa).

His68 and His70 together coordinate Fe(3+). Residues His68 and His70 each coordinate Zn(2+). Arg77, Tyr140, and His173 together coordinate 4-imidazolone-5-propanoate. Tyr140 contacts N-formimidoyl-L-glutamate. Residue His238 participates in Fe(3+) binding. Residue His238 participates in Zn(2+) binding. Gln241 is a 4-imidazolone-5-propanoate binding site. Asp313 provides a ligand contact to Fe(3+). Asp313 provides a ligand contact to Zn(2+). The N-formimidoyl-L-glutamate site is built by Asn315 and Gly317. Ser318 contacts 4-imidazolone-5-propanoate.

The protein belongs to the metallo-dependent hydrolases superfamily. HutI family. It depends on Zn(2+) as a cofactor. Requires Fe(3+) as cofactor.

It localises to the cytoplasm. The catalysed reaction is 4-imidazolone-5-propanoate + H2O = N-formimidoyl-L-glutamate. It participates in amino-acid degradation; L-histidine degradation into L-glutamate; N-formimidoyl-L-glutamate from L-histidine: step 3/3. Its function is as follows. Catalyzes the hydrolytic cleavage of the carbon-nitrogen bond in imidazolone-5-propanoate to yield N-formimidoyl-L-glutamate. It is the third step in the universal histidine degradation pathway. The sequence is that of Imidazolonepropionase from Hahella chejuensis (strain KCTC 2396).